The primary structure comprises 338 residues: Mycothiol acetyltransferase (338 aa).

N-acetyltransferase domains are found at residues 29 to 173 (PETY…HQLP) and 181 to 338 (ISLR…NKFQ). A 1D-myo-inositol 2-(L-cysteinylamino)-2-deoxy-alpha-D-glucopyranoside-binding site is contributed by aspartate 55. Residue 105-107 (LVV) coordinates acetyl-CoA. 1D-myo-inositol 2-(L-cysteinylamino)-2-deoxy-alpha-D-glucopyranoside-binding residues include glutamate 208, lysine 248, and glutamate 261. Acetyl-CoA is bound by residues 265–267 (VGI) and 272–278 (QGKGLGK). Tyrosine 299 is a binding site for 1D-myo-inositol 2-(L-cysteinylamino)-2-deoxy-alpha-D-glucopyranoside.

Belongs to the acetyltransferase family. MshD subfamily. In terms of assembly, monomer.

It catalyses the reaction 1D-myo-inositol 2-(L-cysteinylamino)-2-deoxy-alpha-D-glucopyranoside + acetyl-CoA = mycothiol + CoA + H(+). Catalyzes the transfer of acetyl from acetyl-CoA to desacetylmycothiol (Cys-GlcN-Ins) to form mycothiol. This Renibacterium salmoninarum (strain ATCC 33209 / DSM 20767 / JCM 11484 / NBRC 15589 / NCIMB 2235) protein is Mycothiol acetyltransferase.